Reading from the N-terminus, the 231-residue chain is Phosphatidylserine decarboxylase proenzyme (231 aa).

The active-site Schiff-base intermediate with substrate; via pyruvic acid is the S188. S188 carries the pyruvic acid (Ser); by autocatalysis modification.

Belongs to the phosphatidylserine decarboxylase family. PSD-A subfamily. In terms of assembly, heterodimer of a large membrane-associated beta subunit and a small pyruvoyl-containing alpha subunit. Pyruvate serves as cofactor. In terms of processing, is synthesized initially as an inactive proenzyme. Formation of the active enzyme involves a self-maturation process in which the active site pyruvoyl group is generated from an internal serine residue via an autocatalytic post-translational modification. Two non-identical subunits are generated from the proenzyme in this reaction, and the pyruvate is formed at the N-terminus of the alpha chain, which is derived from the carboxyl end of the proenzyme. The post-translation cleavage follows an unusual pathway, termed non-hydrolytic serinolysis, in which the side chain hydroxyl group of the serine supplies its oxygen atom to form the C-terminus of the beta chain, while the remainder of the serine residue undergoes an oxidative deamination to produce ammonia and the pyruvoyl prosthetic group on the alpha chain.

Its subcellular location is the cell membrane. The enzyme catalyses a 1,2-diacyl-sn-glycero-3-phospho-L-serine + H(+) = a 1,2-diacyl-sn-glycero-3-phosphoethanolamine + CO2. It participates in phospholipid metabolism; phosphatidylethanolamine biosynthesis; phosphatidylethanolamine from CDP-diacylglycerol: step 2/2. Catalyzes the formation of phosphatidylethanolamine (PtdEtn) from phosphatidylserine (PtdSer). The sequence is that of Phosphatidylserine decarboxylase proenzyme from Rickettsia rickettsii (strain Iowa).